The following is a 1792-amino-acid chain: Non-reducing polyketide synthase aptA (1792 aa).

The tract at residues 1–395 (MKDNTHSTTL…PRSFAHSKLA (395 aa)) is N-terminal acylcarrier protein transacylase domain (SAT). Positions 391–824 (HSKLAVVGMA…GGNTTVLLED (434 aa)) constitute a Ketosynthase family 3 (KS3) domain. Active-site for beta-ketoacyl synthase activity residues include cysteine 564, histidine 699, and histidine 742. The malonyl-CoA:ACP transacylase (MAT) domain stretch occupies residues 926-1243 (VFAFTGQGAF…NLVALHLAGC (318 aa)). Residues 1308-1625 (TSLIHEIIEE…PRLLMDRFFS (318 aa)) form a product template (PT) domain region. The tract at residues 1312 to 1447 (HEIIEETIGE…GSVRFEADAE (136 aa)) is N-terminal hotdog fold. One can recognise a PKS/mFAS DH domain in the interval 1312-1621 (HEIIEETIGE…FRRVPRLLMD (310 aa)). The active-site Proton acceptor; for dehydratase activity is histidine 1344. Residues 1475–1621 (QASQLSKALS…FRRVPRLLMD (147 aa)) form a C-terminal hotdog fold region. Residue aspartate 1533 is the Proton donor; for dehydratase activity of the active site. Residues 1634–1649 (VAASASSAPKTATKHA) are compositionally biased toward low complexity. Residues 1634 to 1716 (VAASASSAPK…GPNGTTSQPE (83 aa)) form a disordered region. The segment covering 1664–1684 (TPSSLPTVQAQNTSPPQQVTP) has biased composition (polar residues). Positions 1694–1705 (TPEEEKPGKADA) are enriched in basic and acidic residues. Residues 1715–1792 (PEATGVVGQC…DMMDWLEQYC (78 aa)) form the Carrier domain. The residue at position 1752 (serine 1752) is an O-(pantetheine 4'-phosphoryl)serine.

Pantetheine 4'-phosphate serves as cofactor.

It carries out the reaction holo-[ACP] + 8 malonyl-CoA + acetyl-CoA + 8 H(+) = 3,6,8,9-tetrahydroxy-1-oxo-3-(2-oxopropyl)-1,2,3,4-tetrahydroanthracene-2-carboxyl-[ACP] + 8 CO2 + 9 CoA + 2 H2O. Its pathway is secondary metabolite biosynthesis. Its function is as follows. Non-reducing polyketide synthase (NRPKS); part of the gene cluster that mediates the biosynthesis of asperthecin, an anthraquinone pigment. Catalyzes the formation of the aromatic polyketide from acetyl coenzyme A and seven malonyl coenzyme A molecules. Through its product template (PT) domain, catalyzes the cyclization of the polyketide backbone via C6-C11 aldolcondensation. Polyketide is subsequently hydrolyzed from the NRPKS by the action of the hydrolase aptB into endocrocin-9-anthrone. Endocrocin-9-anthrone is then oxidized into endocrocin by aptC. Endocrocin is likely to decarboxylate spontaneously to form emodin which explains why there is no decarboxylase in the asperthecin biosynthesis cluster. Finally, aptC or another endogenous oxygenase catalyzes additional oxidation steps to form asperthecin. This Emericella nidulans (strain FGSC A4 / ATCC 38163 / CBS 112.46 / NRRL 194 / M139) (Aspergillus nidulans) protein is Non-reducing polyketide synthase aptA.